The chain runs to 236 residues: 2-C-methyl-D-erythritol 4-phosphate cytidylyltransferase (236 aa).

It belongs to the IspD/TarI cytidylyltransferase family. IspD subfamily. Homodimer.

It carries out the reaction 2-C-methyl-D-erythritol 4-phosphate + CTP + H(+) = 4-CDP-2-C-methyl-D-erythritol + diphosphate. It functions in the pathway isoprenoid biosynthesis; isopentenyl diphosphate biosynthesis via DXP pathway; isopentenyl diphosphate from 1-deoxy-D-xylulose 5-phosphate: step 2/6. Functionally, catalyzes the formation of 4-diphosphocytidyl-2-C-methyl-D-erythritol from CTP and 2-C-methyl-D-erythritol 4-phosphate (MEP). This chain is 2-C-methyl-D-erythritol 4-phosphate cytidylyltransferase, found in Salmonella agona (strain SL483).